We begin with the raw amino-acid sequence, 134 residues long: MGSLNVSIVTPDGPVYEGVAQMVIARTKAGELGILPGHVPLVAPLKIDIVRLKVESGEEWVAVNGGFMEVNGEEVNILADTAEREQDIDIDRAEKAKQRAEEELSRAKEQKVDEVMARLALQRAINRIHAKEHN.

This sequence belongs to the ATPase epsilon chain family. In terms of assembly, F-type ATPases have 2 components, CF(1) - the catalytic core - and CF(0) - the membrane proton channel. CF(1) has five subunits: alpha(3), beta(3), gamma(1), delta(1), epsilon(1). CF(0) has three main subunits: a, b and c.

Its subcellular location is the cell membrane. Functionally, produces ATP from ADP in the presence of a proton gradient across the membrane. The sequence is that of ATP synthase epsilon chain from Listeria innocua serovar 6a (strain ATCC BAA-680 / CLIP 11262).